Here is a 291-residue protein sequence, read N- to C-terminus: ATP synthase gamma chain (291 aa).

It belongs to the ATPase gamma chain family. In terms of assembly, F-type ATPases have 2 components, CF(1) - the catalytic core - and CF(0) - the membrane proton channel. CF(1) has five subunits: alpha(3), beta(3), gamma(1), delta(1), epsilon(1). CF(0) has three main subunits: a, b and c.

It is found in the cell inner membrane. Its function is as follows. Produces ATP from ADP in the presence of a proton gradient across the membrane. The gamma chain is believed to be important in regulating ATPase activity and the flow of protons through the CF(0) complex. This is ATP synthase gamma chain from Methylibium petroleiphilum (strain ATCC BAA-1232 / LMG 22953 / PM1).